An 852-amino-acid chain; its full sequence is Gamma-tubulin complex component 2 homolog (852 aa).

Residue Ser73 is modified to Phosphoserine.

Belongs to the TUBGCP family. As to quaternary structure, gamma-tubulin small complex (Gamma TuSC) is a heterotetrameric complex which contains two molecules of gamma-tubulin, and one molecule each of Dgrip84 and Dgrip91. The gamma-tubulin in this complex binds preferentially to GDP over GTP.

Its subcellular location is the cytoplasm. It localises to the cytoskeleton. The protein resides in the microtubule organizing center. It is found in the centrosome. The protein localises to the perinuclear region. The chain is Gamma-tubulin complex component 2 homolog (Grip84) from Drosophila melanogaster (Fruit fly).